Here is a 677-residue protein sequence, read N- to C-terminus: L-type lectin-domain containing receptor kinase IV.2 (677 aa).

Positions Met1–Ser22 are cleaved as a signal peptide. The Extracellular segment spans residues Gln23–Lys291. The tract at residues Asn24–Arg262 is legume-lectin like. N-linked (GlcNAc...) asparagine glycans are attached at residues Asn26, Asn57, Asn81, Asn128, Asn134, Asn171, Asn186, and Asn203. The helical transmembrane segment at Ile292–Ile312 threads the bilayer. Residues Val313–Arg677 lie on the Cytoplasmic side of the membrane. Positions Phe347–Leu625 constitute a Protein kinase domain. Residues Leu353–Val361 and Lys376 contribute to the ATP site. The Proton acceptor role is filled by Asp472.

This sequence in the C-terminal section; belongs to the protein kinase superfamily. Ser/Thr protein kinase family. In the N-terminal section; belongs to the leguminous lectin family.

It is found in the cell membrane. It catalyses the reaction L-seryl-[protein] + ATP = O-phospho-L-seryl-[protein] + ADP + H(+). It carries out the reaction L-threonyl-[protein] + ATP = O-phospho-L-threonyl-[protein] + ADP + H(+). Required during pollen development. Its function is as follows. Involved in resistance response to the pathogenic bacteria Pseudomonas syringae. This chain is L-type lectin-domain containing receptor kinase IV.2, found in Arabidopsis thaliana (Mouse-ear cress).